The chain runs to 286 residues: Bifunctional protein FolD (286 aa).

Residues 164-166 (GRS), Ser193, and Ile234 each bind NADP(+).

The protein belongs to the tetrahydrofolate dehydrogenase/cyclohydrolase family. As to quaternary structure, homodimer.

The catalysed reaction is (6R)-5,10-methylene-5,6,7,8-tetrahydrofolate + NADP(+) = (6R)-5,10-methenyltetrahydrofolate + NADPH. It carries out the reaction (6R)-5,10-methenyltetrahydrofolate + H2O = (6R)-10-formyltetrahydrofolate + H(+). Its pathway is one-carbon metabolism; tetrahydrofolate interconversion. Catalyzes the oxidation of 5,10-methylenetetrahydrofolate to 5,10-methenyltetrahydrofolate and then the hydrolysis of 5,10-methenyltetrahydrofolate to 10-formyltetrahydrofolate. In Maridesulfovibrio salexigens (strain ATCC 14822 / DSM 2638 / NCIMB 8403 / VKM B-1763) (Desulfovibrio salexigens), this protein is Bifunctional protein FolD.